The primary structure comprises 594 residues: MEEYQKKIKEKLNVVPLEPGCYLMKDRNDQVIYVGKAKRLRNRLRSYFTGAHDAKTTRLVGEIRNFEFIVTSSETESLLLELNLIKQYQPRYNILLKDDKSYPFIKITKEKHPRLLVTRTVKKNSGKYFGPYPNAYSAQETKKLLDRIYPFRKCDNMPDKLCLYYHIGQCMGPCVYDVDLEKYAQMTKEITDFLNGEDKTILNHLEERMNKASEQLDFEQAKEYRDMIQHIHNLTKKQKIMSSDNTIRDVFGYSVSKGWMCVQVFFVRQGNMIKRDATMIPIQQTEEEEFYTFIGQFYSLNQHLIPKEVHVPKNLDKDIIQSVVDTKIVQPVRGAKKDMINLANHNAEVQLDNKFELIARDESRTIKAIEELGERMGIQTPIRIEAFDNSNIQGVDPVSAMVTFVDGKPHKKDYRKYKIKTVEGPDDYKSMREVVRRRYTRVLNEGLPLPDLIIVDGGKGHMNGVMDVLENELGLDIPVAGLQKNDKHQTSELLYGASAEIVPLKKNSQAFYLLHRIQDEVHRFAITFHRQTRQKTGLKSVLDDIDGIGTKRKTSLLRTFGSIKKMKEASFDELRQAGLPEKVAKNLQNALQNK.

In terms of domain architecture, GIY-YIG spans 17 to 94; the sequence is LEPGCYLMKD…IKQYQPRYNI (78 aa). The UVR domain occupies 199-234; the sequence is KTILNHLEERMNKASEQLDFEQAKEYRDMIQHIHNL.

The protein belongs to the UvrC family. In terms of assembly, interacts with UvrB in an incision complex.

The protein localises to the cytoplasm. In terms of biological role, the UvrABC repair system catalyzes the recognition and processing of DNA lesions. UvrC both incises the 5' and 3' sides of the lesion. The N-terminal half is responsible for the 3' incision and the C-terminal half is responsible for the 5' incision. The chain is UvrABC system protein C from Staphylococcus epidermidis (strain ATCC 35984 / DSM 28319 / BCRC 17069 / CCUG 31568 / BM 3577 / RP62A).